The primary structure comprises 310 residues: Acetyl-coenzyme A carboxylase carboxyl transferase subunit beta, chloroplastic (310 aa).

Residues 47-310 (LWARCDNCGN…LYLSVPYNKN (264 aa)) enclose the CoA carboxyltransferase N-terminal domain. Positions 51, 54, 70, and 73 each coordinate Zn(2+). Residues 51–73 (CDNCGNMLYVKFLKQNRSVCEEC) form a C4-type zinc finger.

It belongs to the AccD/PCCB family. Acetyl-CoA carboxylase is a heterohexamer composed of biotin carboxyl carrier protein, biotin carboxylase and 2 subunits each of ACCase subunit alpha and ACCase plastid-coded subunit beta (accD). Zn(2+) is required as a cofactor.

The protein resides in the plastid. The protein localises to the chloroplast stroma. The catalysed reaction is N(6)-carboxybiotinyl-L-lysyl-[protein] + acetyl-CoA = N(6)-biotinyl-L-lysyl-[protein] + malonyl-CoA. It participates in lipid metabolism; malonyl-CoA biosynthesis; malonyl-CoA from acetyl-CoA: step 1/1. Component of the acetyl coenzyme A carboxylase (ACC) complex. Biotin carboxylase (BC) catalyzes the carboxylation of biotin on its carrier protein (BCCP) and then the CO(2) group is transferred by the transcarboxylase to acetyl-CoA to form malonyl-CoA. In Adiantum capillus-veneris (Maidenhair fern), this protein is Acetyl-coenzyme A carboxylase carboxyl transferase subunit beta, chloroplastic.